We begin with the raw amino-acid sequence, 469 residues long: Tryptophan biosynthesis protein TrpCF (469 aa).

The interval 1–271 (MSEQLSEHIS…LAVRKIVLGE (271 aa)) is indole-3-glycerol phosphate synthase. Residues 272–469 (HKVCGLTHPD…QQVFQQLRNY (198 aa)) form an N-(5'-phosphoribosyl)anthranilate isomerase region.

It in the N-terminal section; belongs to the TrpC family. The protein in the C-terminal section; belongs to the TrpF family. Monomer.

It carries out the reaction N-(5-phospho-beta-D-ribosyl)anthranilate = 1-(2-carboxyphenylamino)-1-deoxy-D-ribulose 5-phosphate. The catalysed reaction is 1-(2-carboxyphenylamino)-1-deoxy-D-ribulose 5-phosphate + H(+) = (1S,2R)-1-C-(indol-3-yl)glycerol 3-phosphate + CO2 + H2O. It participates in amino-acid biosynthesis; L-tryptophan biosynthesis; L-tryptophan from chorismate: step 3/5. Its pathway is amino-acid biosynthesis; L-tryptophan biosynthesis; L-tryptophan from chorismate: step 4/5. Bifunctional enzyme that catalyzes two sequential steps of tryptophan biosynthetic pathway. The first reaction is catalyzed by the isomerase, coded by the TrpF domain; the second reaction is catalyzed by the synthase, coded by the TrpC domain. This is Tryptophan biosynthesis protein TrpCF (trpCF) from Vibrio cholerae serotype O1 (strain ATCC 39315 / El Tor Inaba N16961).